The chain runs to 393 residues: S-adenosylmethionine synthase 2 (393 aa).

E9 is a Mg(2+) binding site. H15 is a binding site for ATP. E43 serves as a coordination point for K(+). E56 and Q99 together coordinate L-methionine. Residues 167–169, 235–238, D246, 252–253, A269, K273, and K277 contribute to the ATP site; these read DGK, SGRF, and RK. L-methionine is bound at residue D246. An L-methionine-binding site is contributed by K277.

This sequence belongs to the AdoMet synthase family. In terms of assembly, homotetramer. Requires Mn(2+) as cofactor. It depends on Mg(2+) as a cofactor. The cofactor is Co(2+). K(+) serves as cofactor. Mostly expressed in roots. Also present in stems and leaves.

It is found in the cytoplasm. It catalyses the reaction L-methionine + ATP + H2O = S-adenosyl-L-methionine + phosphate + diphosphate. It participates in amino-acid biosynthesis; S-adenosyl-L-methionine biosynthesis; S-adenosyl-L-methionine from L-methionine: step 1/1. Catalyzes the formation of S-adenosylmethionine from methionine and ATP. The reaction comprises two steps that are both catalyzed by the same enzyme: formation of S-adenosylmethionine (AdoMet) and triphosphate, and subsequent hydrolysis of the triphosphate. This is S-adenosylmethionine synthase 2 (SAM2) from Solanum lycopersicum (Tomato).